Consider the following 161-residue polypeptide: NADH-quinone oxidoreductase subunit I (161 aa).

2 4Fe-4S ferredoxin-type domains span residues leucine 52 to glutamate 82 and lysine 92 to valine 121. [4Fe-4S] cluster-binding residues include cysteine 62, cysteine 65, cysteine 68, cysteine 72, cysteine 101, cysteine 104, cysteine 107, and cysteine 111.

Belongs to the complex I 23 kDa subunit family. NDH-1 is composed of 14 different subunits. Subunits NuoA, H, J, K, L, M, N constitute the membrane sector of the complex. [4Fe-4S] cluster is required as a cofactor.

The protein resides in the cell inner membrane. It catalyses the reaction a quinone + NADH + 5 H(+)(in) = a quinol + NAD(+) + 4 H(+)(out). In terms of biological role, NDH-1 shuttles electrons from NADH, via FMN and iron-sulfur (Fe-S) centers, to quinones in the respiratory chain. The immediate electron acceptor for the enzyme in this species is believed to be ubiquinone. Couples the redox reaction to proton translocation (for every two electrons transferred, four hydrogen ions are translocated across the cytoplasmic membrane), and thus conserves the redox energy in a proton gradient. The protein is NADH-quinone oxidoreductase subunit I of Aromatoleum aromaticum (strain DSM 19018 / LMG 30748 / EbN1) (Azoarcus sp. (strain EbN1)).